A 1262-amino-acid polypeptide reads, in one-letter code: Putative late blight resistance protein homolog R1B-23 (1262 aa).

Coiled coils occupy residues 364 to 384 and 475 to 496; these read DSLAFLKNQLQVIQTKFESMQ and RMNEEIVGFEDVIETLRKKLLN. One can recognise an NB-ARC domain in the interval 475-761; that stretch reads RMNEEIVGFE…ISESFIKSCE (287 aa). 508-515 contributes to the ATP binding site; the sequence is GMPGLGKT. 6 LRR repeats span residues 890–914, 933–961, 1036–1059, 1064–1083, 1084–1112, and 1133–1157; these read FKFLKVLDLEHQVVIDSIPTELFYL, LWNLETLILNRTSAATGKTLLLPSTVWDM, PIRLEMLKLHQSNIFKPISFCISA, YLELSGFYLDSQYLSETADH, LKHLEVLKLYYVEFGDHREWKVSNGMFPQ, and FPNLEQLVLRRCRHLMEIPSCFMDI. One can recognise an HMA domain in the interval 1181–1248; that stretch reads ETQVEDNQNT…KLRNVAYADE (68 aa).

The protein belongs to the disease resistance NB-LRR family.

The protein localises to the cytoplasm. It is found in the membrane. Confers resistance to late blight (Phytophthora infestans) races carrying the avirulence gene Avr1. Resistance proteins guard the plant against pathogens that contain an appropriate avirulence protein via an indirect interaction with this avirulence protein. That triggers a defense system including the hypersensitive response, which restricts the pathogen growth. In Solanum demissum (Wild potato), this protein is Putative late blight resistance protein homolog R1B-23 (R1B-23).